The chain runs to 177 residues: ATP-dependent protease subunit HslV (177 aa).

Thr-2 is an active-site residue. Residues Gly-157, Cys-160, and Thr-163 each coordinate Na(+).

Belongs to the peptidase T1B family. HslV subfamily. In terms of assembly, a double ring-shaped homohexamer of HslV is capped on each side by a ring-shaped HslU homohexamer. The assembly of the HslU/HslV complex is dependent on binding of ATP.

It is found in the cytoplasm. It carries out the reaction ATP-dependent cleavage of peptide bonds with broad specificity.. Allosterically activated by HslU binding. Protease subunit of a proteasome-like degradation complex believed to be a general protein degrading machinery. The chain is ATP-dependent protease subunit HslV from Aeromonas salmonicida (strain A449).